A 156-amino-acid polypeptide reads, in one-letter code: 3-hydroxyacyl-[acyl-carrier-protein] dehydratase FabZ (156 aa).

The active site involves histidine 57.

Belongs to the thioester dehydratase family. FabZ subfamily.

The protein resides in the cytoplasm. The catalysed reaction is a (3R)-hydroxyacyl-[ACP] = a (2E)-enoyl-[ACP] + H2O. Functionally, involved in unsaturated fatty acids biosynthesis. Catalyzes the dehydration of short chain beta-hydroxyacyl-ACPs and long chain saturated and unsaturated beta-hydroxyacyl-ACPs. The polypeptide is 3-hydroxyacyl-[acyl-carrier-protein] dehydratase FabZ (Anaeromyxobacter sp. (strain K)).